A 313-amino-acid polypeptide reads, in one-letter code: Olfactory receptor 1G1 (313 aa).

Topologically, residues Met1–Lys25 are extracellular. Residue Asn5 is glycosylated (N-linked (GlcNAc...) asparagine). The helical transmembrane segment at Ala26–Ile49 threads the bilayer. The Cytoplasmic segment spans residues Ile50 to Thr57. A helical membrane pass occupies residues Pro58–Pro79. Residues Lys80–Gln100 lie on the Extracellular side of the membrane. Cys97 and Cys189 are joined by a disulfide. A helical transmembrane segment spans residues Leu101–Tyr120. Topologically, residues Asp121–Leu140 are cytoplasmic. A helical membrane pass occupies residues Cys141 to Leu158. Topologically, residues His159–Glu196 are extracellular. Residues Leu197–Thr219 form a helical membrane-spanning segment. Over Asn220 to Lys236 the chain is Cytoplasmic. A helical transmembrane segment spans residues Ala237–Tyr259. At Phe260 to Thr272 the chain is on the extracellular side. The chain crosses the membrane as a helical span at residues Val273–Leu292. Topologically, residues Arg293–Pro313 are cytoplasmic.

It belongs to the G-protein coupled receptor 1 family.

It is found in the cell membrane. Odorant receptor. This Pan troglodytes (Chimpanzee) protein is Olfactory receptor 1G1 (OR1G1).